Reading from the N-terminus, the 210-residue chain is Uracil phosphoribosyltransferase (210 aa).

5-phospho-alpha-D-ribose 1-diphosphate is bound by residues Arg-78, Arg-103, and 130-138 (DPMLATGGS). Uracil contacts are provided by residues Ile-193 and 198-200 (GDA). Asp-199 is a 5-phospho-alpha-D-ribose 1-diphosphate binding site.

It belongs to the UPRTase family. Mg(2+) is required as a cofactor.

It catalyses the reaction UMP + diphosphate = 5-phospho-alpha-D-ribose 1-diphosphate + uracil. The protein operates within pyrimidine metabolism; UMP biosynthesis via salvage pathway; UMP from uracil: step 1/1. With respect to regulation, allosterically activated by GTP. In terms of biological role, catalyzes the conversion of uracil and 5-phospho-alpha-D-ribose 1-diphosphate (PRPP) to UMP and diphosphate. This chain is Uracil phosphoribosyltransferase, found in Salinibacter ruber (strain DSM 13855 / M31).